The primary structure comprises 744 residues: Glucosamine inositolphosphorylceramide transferase 1 (744 aa).

The next 3 helical transmembrane spans lie at 31–51, 378–398, and 460–480; these read FLVA…WLVV, SLFG…VGFV, and LFFC…VHFL. Substrate contacts are provided by residues Asn-534, 558–563, 579–581, Arg-609, and 665–669; these read NSLNNR, DDD, and FNCED. Residue Asp-581 participates in Mn(2+) binding. Cys-667 and Cys-718 are disulfide-bonded. The active site involves Asp-669.

Belongs to the glycosyltransferase 64 family. Mn(2+) serves as cofactor.

The protein localises to the membrane. It participates in sphingolipid metabolism. Essential protein. Glycosyltransferase that mediates the glycosylation of glycosylinositol phosphorylceramides (GIPCs), the major sphingolipids in the plasma membrane; acts as a HexN(Ac)-specific GIPC sugar transferase. Responsible for the glycosylation of a subgroup of GIPCs found in seeds and pollen that contain GlcNAc and GlcN (GlcN(Ac)). Maybe involved in the maintenance of cell-cell adhesion. The chain is Glucosamine inositolphosphorylceramide transferase 1 from Oryza sativa subsp. indica (Rice).